The following is a 118-amino-acid chain: MAGEGEVIACHTLEVWNEKVKDANESKKLIVIDFTASWCPPCRFIAPVFAEMAKKFTNVVFFKIDVDELQAVAQEFKVEAMPTFVFMKEGNIIDRVVGAAKDEINEKLMKHGGLVASA.

At alanine 2 the chain carries N-acetylalanine. The 112-residue stretch at 2–113 (AGEGEVIACH…INEKLMKHGG (112 aa)) folds into the Thioredoxin domain. Catalysis depends on nucleophile residues cysteine 39 and cysteine 42. Cysteine 39 and cysteine 42 are oxidised to a cystine.

Belongs to the thioredoxin family. Plant H-type subfamily. In terms of assembly, interacts with MDH1.

It localises to the cytoplasm. Thiol-disulfide oxidoreductase involved in response to pathogens and oxidative stresses. Required for the response to victorin, a phytotoxin which induces programmed cell death in sensitive plants. Possesses insulin disulfide bonds reducing activity. This Arabidopsis thaliana (Mouse-ear cress) protein is Thioredoxin H5 (TRX5).